An 819-amino-acid polypeptide reads, in one-letter code: Serine/threonine-protein phosphatase 1 regulatory subunit 10 (819 aa).

In terms of domain architecture, TFIIS N-terminal spans Lys-73–Gln-147. 3 disordered regions span residues Gln-151–Ser-204, Lys-296–Val-391, and Ser-495–Met-785. Composition is skewed to basic and acidic residues over residues Ala-153–Lys-165 and Lys-173–Lys-190. Over residues Ser-305 to Lys-327 the composition is skewed to polar residues. Positions Lys-386–Val-415 match the PP1-binding motif motif. Residues Ser-495–Asp-504 show a composition bias toward basic and acidic residues. 2 stretches are compositionally biased toward polar residues: residues Met-533–Asp-543 and Met-560–Leu-578. Basic and acidic residues predominate over residues Lys-589–Lys-604. A compositionally biased stretch (low complexity) spans Leu-606 to Gly-618. 2 stretches are compositionally biased toward pro residues: residues Phe-635–Asn-663 and His-670–Asn-695. Basic and acidic residues-rich tracts occupy residues His-704 to Asp-715 and His-758 to Arg-777. Residues Met-785–Ile-813 form a C3H1-type zinc finger.

As to quaternary structure, component of the PNUTS-PP1 complex (also named PTW/PP1 complex).

It localises to the nucleus. The protein localises to the chromosome. In terms of biological role, substrate-recognition component of the PNUTS-PP1 protein phosphatase complex, a protein phosphatase 1 (PP1) complex that promotes RNA polymerase II transcription pause-release, allowing transcription elongation. Promoter-proximal pausing by RNA polymerase II is a transcription halt following transcription initiation but prior to elongation, which acts as a checkpoint to control that transcripts are favorably configured for transcriptional elongation. The PNUTS-PP1 complex mediates the release of RNA polymerase II from promoter-proximal region of genes by catalyzing dephosphorylation of proteins involved in transcription. In some context, PPP1R10/PNUTS also acts as an inhibitor of protein phosphatase 1 (PP1) activity by preventing access to substrates. The chain is Serine/threonine-protein phosphatase 1 regulatory subunit 10 (ppp1r10) from Xenopus laevis (African clawed frog).